Consider the following 227-residue polypeptide: PKHD-type hydroxylase Bcep18194_B0892 (227 aa).

The region spanning 78–178 is the Fe2OG dioxygenase domain; that stretch reads KVFPPLFNRY…RVASFFWIQS (101 aa). Histidine 96, aspartate 98, and histidine 159 together coordinate Fe cation. Arginine 169 serves as a coordination point for 2-oxoglutarate.

Fe(2+) serves as cofactor. The cofactor is L-ascorbate.

The polypeptide is PKHD-type hydroxylase Bcep18194_B0892 (Burkholderia lata (strain ATCC 17760 / DSM 23089 / LMG 22485 / NCIMB 9086 / R18194 / 383)).